We begin with the raw amino-acid sequence, 102 residues long: Large ribosomal subunit protein bL21 (102 aa).

The segment covering 79-91 (RKDSKRKKGHRQP) has biased composition (basic residues). Residues 79 to 102 (RKDSKRKKGHRQPYTKLTIDKINA) are disordered.

This sequence belongs to the bacterial ribosomal protein bL21 family. In terms of assembly, part of the 50S ribosomal subunit. Contacts protein L20.

Functionally, this protein binds to 23S rRNA in the presence of protein L20. This chain is Large ribosomal subunit protein bL21, found in Staphylococcus carnosus (strain TM300).